We begin with the raw amino-acid sequence, 363 residues long: RNA polymerase I-specific transcription initiation factor RRN5 (363 aa).

Residues 301–344 are disordered; that stretch reads LSRRDAPPVHQDENQENQENQENQEQDNTASEGESEAERDEIDE. A compositionally biased stretch (basic and acidic residues) spans 302–313; that stretch reads SRRDAPPVHQDE. The segment covering 317–328 has biased composition (low complexity); it reads NQENQENQEQDN. The segment covering 333–344 has biased composition (acidic residues); it reads GESEAERDEIDE.

As to quaternary structure, component of the UAF (upstream activation factor) complex which consists of UAF30, RRN5, RRN9, RRN10, and histones H3 and H4.

The protein localises to the nucleus. It localises to the nucleolus. Component of the UAF (upstream activation factor) complex which interacts with the upstream element of the RNA polymerase I promoter and forms a stable preinitiation complex. Together with SPT15/TBP UAF seems to stimulate basal transcription to a fully activated level. The protein is RNA polymerase I-specific transcription initiation factor RRN5 (RRN5) of Saccharomyces cerevisiae (strain ATCC 204508 / S288c) (Baker's yeast).